The following is a 364-amino-acid chain: DNA replication and repair protein RecF (364 aa).

Residue 30-37 participates in ATP binding; the sequence is GLNAQGKS.

It belongs to the RecF family.

The protein resides in the cytoplasm. In terms of biological role, the RecF protein is involved in DNA metabolism; it is required for DNA replication and normal SOS inducibility. RecF binds preferentially to single-stranded, linear DNA. It also seems to bind ATP. In Caldanaerobacter subterraneus subsp. tengcongensis (strain DSM 15242 / JCM 11007 / NBRC 100824 / MB4) (Thermoanaerobacter tengcongensis), this protein is DNA replication and repair protein RecF.